The following is a 394-amino-acid chain: LL-diaminopimelate aminotransferase (394 aa).

Substrate-binding residues include Y14 and G41. Pyridoxal 5'-phosphate is bound by residues Y71, 104–105 (AK), Y128, N174, Y205, and 233–235 (SFS). Residues K105, Y128, and N174 each contribute to the substrate site. K236 is modified (N6-(pyridoxal phosphate)lysine). Pyridoxal 5'-phosphate-binding residues include R244 and N275. Positions 275 and 369 each coordinate substrate.

It belongs to the class-I pyridoxal-phosphate-dependent aminotransferase family. LL-diaminopimelate aminotransferase subfamily. As to quaternary structure, homodimer. Pyridoxal 5'-phosphate is required as a cofactor.

It catalyses the reaction (2S,6S)-2,6-diaminopimelate + 2-oxoglutarate = (S)-2,3,4,5-tetrahydrodipicolinate + L-glutamate + H2O + H(+). The protein operates within amino-acid biosynthesis; L-lysine biosynthesis via DAP pathway; LL-2,6-diaminopimelate from (S)-tetrahydrodipicolinate (aminotransferase route): step 1/1. In terms of biological role, involved in the synthesis of meso-diaminopimelate (m-DAP or DL-DAP), required for both lysine and peptidoglycan biosynthesis. Catalyzes the direct conversion of tetrahydrodipicolinate to LL-diaminopimelate. Is also able to use meso-diaminopimelate, cystathionine, lysine or ornithine as substrates. The chain is LL-diaminopimelate aminotransferase from Chlamydia trachomatis serovar D (strain ATCC VR-885 / DSM 19411 / UW-3/Cx).